The following is a 354-amino-acid chain: Rhodopsin (354 aa).

Over 1–36 (MNGTEGPNFYVPFSNKSGVVRSPFEYPQYYLAEPWQ) the chain is Extracellular. N-linked (GlcNAc...) asparagine glycosylation is found at Asn-2 and Asn-15. The chain crosses the membrane as a helical span at residues 37-61 (YSVLAAYMFLLILLGFPVNFLTLYV). The Cytoplasmic segment spans residues 62-73 (TIQHKKLRTPLN). The chain crosses the membrane as a helical span at residues 74–96 (YILLNLAFANHFMVFGGFPVTMY). Over 97 to 110 (SSMHGYFVFGQTGC) the chain is Extracellular. Cys-110 and Cys-187 form a disulfide bridge. A helical transmembrane segment spans residues 111 to 133 (YIEGFFATMGGEIALWSLVVLAI). The 'Ionic lock' involved in activated form stabilization signature appears at 134–136 (ERY). The Cytoplasmic portion of the chain corresponds to 134–152 (ERYVVVCKPMSNFRFGENH). The helical transmembrane segment at 153–173 (AIMGVMMTWIMALACAAPPLF) threads the bilayer. The Extracellular portion of the chain corresponds to 174–202 (GWSRYIPEGMQCSCGVDYYTLKPEVNNES). A helical membrane pass occupies residues 203–224 (FVIYMFLVHFTIPLMIIFFCYG). The Cytoplasmic portion of the chain corresponds to 225-252 (RLVCTVKEAAAQQQESATTQKAEKEVTR). Residues 253–274 (MVIIMVVAFLICWVPYASVAFY) form a helical membrane-spanning segment. The Extracellular portion of the chain corresponds to 275–286 (IFSNQGTDFGPI). A helical membrane pass occupies residues 287-308 (FMTVPAFFAKSSAIYNPVIYIV). Lys-296 bears the N6-(retinylidene)lysine mark. Residues 309-354 (LNKQFRNCMITTICCGKNPFGDDETTSAATSKTEASSVSSSQVSPA) lie on the Cytoplasmic side of the membrane. Residues Cys-322 and Cys-323 are each lipidated (S-palmitoyl cysteine). Residues 332 to 354 (ETTSAATSKTEASSVSSSQVSPA) are disordered. Residues 334–354 (TSAATSKTEASSVSSSQVSPA) show a composition bias toward low complexity.

It belongs to the G-protein coupled receptor 1 family. Opsin subfamily. Contains one covalently linked retinal chromophore. Upon light absorption, the covalently bound 11-cis-retinal is converted to all-trans-retinal. After hydrolysis of the Schiff base and release of the covalently bound all-trans-retinal, active rhodopsin is regenerated by binding of a fresh molecule of 11-cis-retinal.

The protein localises to the membrane. Its subcellular location is the cell projection. It is found in the cilium. The protein resides in the photoreceptor outer segment. Photoreceptor required for image-forming vision at low light intensity. Required for photoreceptor cell viability after birth. Light-induced isomerization of 11-cis to all-trans retinal triggers a conformational change that activates signaling via G-proteins. Subsequent receptor phosphorylation mediates displacement of the bound G-protein alpha subunit by arrestin and terminates signaling. The protein is Rhodopsin (RHO) of Ambystoma tigrinum (Eastern tiger salamander).